A 382-amino-acid chain; its full sequence is Opsin Rh5 (382 aa).

Residues 1 to 49 lie on the Extracellular side of the membrane; it reads MHINGPSGPQAYVNDSLGDGSVFPMGHGYPAEYQHMVHAHWRGFREAPI. Residue N14 is glycosylated (N-linked (GlcNAc...) asparagine). The chain crosses the membrane as a helical span at residues 50–76; sequence YYHAGFYIAFIVLMLSSIFGNGLVIWI. Topologically, residues 77–88 are cytoplasmic; it reads FSTSKSLRTPSN. The chain crosses the membrane as a helical span at residues 89-112; it reads LLILNLAIFDLFMCTNMPHYLINA. The Extracellular segment spans residues 113 to 127; the sequence is TVGYIVGGDLGCDIY. Residues C124 and C201 are joined by a disulfide bond. A helical membrane pass occupies residues 128-147; the sequence is ALNGGISGMGASITNAFIAF. The Cytoplasmic portion of the chain corresponds to 148–165; that stretch reads DRYKTISNPIDGRLSYGQ. A helical transmembrane segment spans residues 166–190; sequence IVLLILFTWLWATPFSVLPLFQIWG. Over 191 to 214 the chain is Extracellular; it reads RYQPEGFLTTCSFDYLTNTDENRL. A helical membrane pass occupies residues 215 to 242; that stretch reads FVRTIFVWSYVIPMTMILVSYYKLFTHV. Over 243–278 the chain is Cytoplasmic; that stretch reads RVHEKMLAEQAKKMNVKSLSANANADNMSVELRIAK. Residues 279-302 traverse the membrane as a helical segment; that stretch reads AALIIYMLFILAWTPYSVVALIGC. Topologically, residues 303 to 310 are extracellular; it reads FGEQQLIT. The helical transmembrane segment at 311-335 threads the bilayer; it reads PFVSMLPCLACKSVSCLDPWVYATS. K322 is subject to N6-(retinylidene)lysine. Residues 336–382 lie on the Cytoplasmic side of the membrane; that stretch reads HPKYRLELERRLPWLGIREKHATSGTSGGQESVASVSGDTLALSVQN. The segment at 357–382 is disordered; sequence ATSGTSGGQESVASVSGDTLALSVQN. Residues 358–382 show a composition bias toward polar residues; the sequence is TSGTSGGQESVASVSGDTLALSVQN.

The protein belongs to the G-protein coupled receptor 1 family. Opsin subfamily. In terms of processing, phosphorylated on some or all of the serine and threonine residues present in the C-terminal region. Expressed specifically in the retina. Each Drosophila eye is composed of 800 facets or ommatidia. Each ommatidium contains 8 photoreceptor cells (R1-R8), the R1 to R6 cells are outer cells, while R7 and R8 are inner cells. Rh5 is expressed only in R8 photoreceptor cells in a subset of ommatidia.

The protein localises to the cell projection. It is found in the rhabdomere membrane. Functionally, visual pigments are the light-absorbing molecules that mediate vision. They consist of an apoprotein, opsin, covalently linked to cis-retinal. This chain is Opsin Rh5 (Rh5), found in Drosophila melanogaster (Fruit fly).